The following is a 328-amino-acid chain: Surface antigen CRP170 (328 aa).

Repeats lie at residues 38 to 102 (NAPC…CKKC) and 103 to 167 (NAPC…CKKC).

This chain is Surface antigen CRP170, found in Giardia intestinalis (Giardia lamblia).